The following is a 363-amino-acid chain: Glutamate 5-kinase (363 aa).

Lys-6 contacts ATP. Residues Ser-46, Asp-133, and Asn-145 each contribute to the substrate site. ATP-binding positions include 165–166 and 207–213; these read TD and TGGMHTK. Residues 271 to 349 enclose the PUA domain; that stretch reads TGRLLLDEGA…RDIEAVLGFT (79 aa).

Belongs to the glutamate 5-kinase family.

Its subcellular location is the cytoplasm. It catalyses the reaction L-glutamate + ATP = L-glutamyl 5-phosphate + ADP. It participates in amino-acid biosynthesis; L-proline biosynthesis; L-glutamate 5-semialdehyde from L-glutamate: step 1/2. In terms of biological role, catalyzes the transfer of a phosphate group to glutamate to form L-glutamate 5-phosphate. The polypeptide is Glutamate 5-kinase (Deinococcus geothermalis (strain DSM 11300 / CIP 105573 / AG-3a)).